A 385-amino-acid polypeptide reads, in one-letter code: Protein pelota homolog (385 aa).

A Glycyl lysine isopeptide (Lys-Gly) (interchain with G-Cter in SUMO2) cross-link involves residue K162. 4 positions are modified to phosphoserine: S374, S380, S381, and S382.

The protein belongs to the eukaryotic release factor 1 family. Pelota subfamily. As to quaternary structure, component of the Pelota-HBS1L complex, also named Dom34-Hbs1 complex, composed of PELO and HBS1L. Interacts with PINK1. Interacts with ABCE1. Interacts with CNOT4. A divalent metal cation is required as a cofactor.

The protein localises to the cytoplasm. Its function is as follows. Component of the Pelota-HBS1L complex, a complex that recognizes stalled ribosomes and triggers the No-Go Decay (NGD) pathway. In the Pelota-HBS1L complex, PELO recognizes ribosomes stalled at the 3' end of an mRNA and engages stalled ribosomes by destabilizing mRNA in the mRNA channel. Following mRNA extraction from stalled ribosomes by the SKI complex, the Pelota-HBS1L complex promotes recruitment of ABCE1, which drives the disassembly of stalled ribosomes, followed by degradation of damaged mRNAs as part of the NGD pathway. As part of the PINK1-regulated signaling, upon mitochondrial damage is recruited to the ribosome/mRNA-ribonucleoprotein complex associated to mitochondrial outer membrane thereby enabling the recruitment of autophagy receptors and induction of mitophagy. The protein is Protein pelota homolog (PELO) of Bos taurus (Bovine).